A 514-amino-acid chain; its full sequence is Chromosomal replication initiator protein DnaA (514 aa).

The domain I, interacts with DnaA modulators stretch occupies residues 1-90 (MSVELWQQCV…KRSRTPRAAI (90 aa)). The domain II stretch occupies residues 91–177 (VPSQTHVAPP…QVEGALKHTS (87 aa)). The interval 178–394 (YLNRTFTFEN…GALKRVIAHS (217 aa)) is domain III, AAA+ region. The ATP site is built by Gly222, Gly224, Lys225, and Thr226. Residues 395 to 514 (HFMGRPITIE…YKNLLRTLTT (120 aa)) form a domain IV, binds dsDNA region.

This sequence belongs to the DnaA family. In terms of assembly, oligomerizes as a right-handed, spiral filament on DNA at oriC.

It localises to the cytoplasm. Plays an essential role in the initiation and regulation of chromosomal replication. ATP-DnaA binds to the origin of replication (oriC) to initiate formation of the DNA replication initiation complex once per cell cycle. Binds the DnaA box (a 9 base pair repeat at the origin) and separates the double-stranded (ds)DNA. Forms a right-handed helical filament on oriC DNA; dsDNA binds to the exterior of the filament while single-stranded (ss)DNA is stabiized in the filament's interior. The ATP-DnaA-oriC complex binds and stabilizes one strand of the AT-rich DNA unwinding element (DUE), permitting loading of DNA polymerase. After initiation quickly degrades to an ADP-DnaA complex that is not apt for DNA replication. Binds acidic phospholipids. The chain is Chromosomal replication initiator protein DnaA from Pseudomonas aeruginosa (strain LESB58).